The chain runs to 155 residues: Small ribosomal subunit protein uS7 (155 aa).

This sequence belongs to the universal ribosomal protein uS7 family. In terms of assembly, part of the 30S ribosomal subunit. Contacts proteins S9 and S11.

In terms of biological role, one of the primary rRNA binding proteins, it binds directly to 16S rRNA where it nucleates assembly of the head domain of the 30S subunit. Is located at the subunit interface close to the decoding center, probably blocks exit of the E-site tRNA. The chain is Small ribosomal subunit protein uS7 from Xylella fastidiosa (strain 9a5c).